A 521-amino-acid chain; its full sequence is Circadian clock oscillator protein KaiC (521 aa).

2 consecutive KaiC domains span residues 1–248 (MNEP…INIF) and 262–521 (ARIS…LDEE). The ATP site is built by G50, T51, G52, K53, T54, L55, S90, K225, L226, R227, T229, H231, T241, T291, G292, T293, G294, K295, T296, and L297. A Mg(2+)-binding site is contributed by T54. T296 contributes to the Mg(2+) binding site. Residue E319 participates in Mg(2+) binding. W332 contributes to the ATP binding site. Position 432 is a phosphoserine; by autocatalysis (S432). T433 is modified (phosphothreonine; by autocatalysis). R452, K458, M459, R460, S462, H464, and K466 together coordinate ATP.

The protein belongs to the KaiC family. As to quaternary structure, homohexamer; hexamerization is dependent on ATP-binding. The KaiABC complex composition changes during the circadian cycle to control KaiC phosphorylation. Complexes KaiC(6), KaiA(2-4):KaiC(6), KaiB(6):KaiC(6) and KaiC(6):KaiB(6):KaiA(12) are among the most important forms, many form cooperatively. KaiC interacts with SasA, activating its autokinase function and leading to RpaA activation. Requires Mg(2+) as cofactor. Phosphorylated on serine and threonine residues by autocatalysis. Has a 4 step phosphorylation cycle; the autokinase acts first on Thr-433, then Ser-432. When Ser-432 is modified KaiC switches to an autophosphatase mode, acting first on phospho-Thr-433 then phospho-Ser-432.

The enzyme catalyses L-seryl-[protein] + ATP = O-phospho-L-seryl-[protein] + ADP + H(+). It carries out the reaction L-threonyl-[protein] + ATP = O-phospho-L-threonyl-[protein] + ADP + H(+). It catalyses the reaction ATP + H2O = ADP + phosphate + H(+). The interaction with KaiA enhances its phosphorylation status, while the interaction with KaiB decreases it. Central component of the KaiABC oscillator complex, which constitutes the main circadian regulator in cyanobacteria. Complex composition changes during the circadian cycle to control KaiC phosphorylation. KaiA stimulates KaiC autophosphorylation, while KaiB sequesters KaiA, leading to KaiC autodephosphorylation. Clock output pathways impact the RpaA transcriptional regulator. KaiC enhances the autophosphorylation activity of SasA, which then transfers its phosphate group to RpaA to activate it. KaiB and KaiC together enhance the phospho-RpaA dephosphatase activity of CikA. Its function is as follows. Has a weak, temperature-independent ATPase activity; ATPase activity defines the circadian period. The phosphorylation state of KaiC modulates its ATPase activity and effects KaiB binding. The protein is Circadian clock oscillator protein KaiC of Rippkaea orientalis (strain PCC 8801 / RF-1) (Cyanothece sp. (strain PCC 8801)).